Reading from the N-terminus, the 386-residue chain is Formate-dependent phosphoribosylglycinamide formyltransferase (386 aa).

N(1)-(5-phospho-beta-D-ribosyl)glycinamide contacts are provided by residues 15-16 and Glu75; that span reads EL. ATP is bound by residues Arg107, Lys148, 153–158, 188–191, and Glu196; these read SSGKGQ and EQFI. Positions 112-301 constitute an ATP-grasp domain; sequence ALAVQQLNLQ…EFELHLRAIV (190 aa). Residues Glu260 and Glu272 each contribute to the Mg(2+) site. N(1)-(5-phospho-beta-D-ribosyl)glycinamide contacts are provided by residues Asp279, Lys349, and 356 to 357; that span reads RR.

It belongs to the PurK/PurT family. Homodimer.

The enzyme catalyses N(1)-(5-phospho-beta-D-ribosyl)glycinamide + formate + ATP = N(2)-formyl-N(1)-(5-phospho-beta-D-ribosyl)glycinamide + ADP + phosphate + H(+). Its pathway is purine metabolism; IMP biosynthesis via de novo pathway; N(2)-formyl-N(1)-(5-phospho-D-ribosyl)glycinamide from N(1)-(5-phospho-D-ribosyl)glycinamide (formate route): step 1/1. Its function is as follows. Involved in the de novo purine biosynthesis. Catalyzes the transfer of formate to 5-phospho-ribosyl-glycinamide (GAR), producing 5-phospho-ribosyl-N-formylglycinamide (FGAR). Formate is provided by PurU via hydrolysis of 10-formyl-tetrahydrofolate. The protein is Formate-dependent phosphoribosylglycinamide formyltransferase of Francisella tularensis subsp. holarctica (strain LVS).